Here is a 515-residue protein sequence, read N- to C-terminus: GMP synthase [glutamine-hydrolyzing] (515 aa).

Positions 10–200 (TIIVLDFGSQ…VFGVCGCSEG (191 aa)) constitute a Glutamine amidotransferase type-1 domain. The active-site Nucleophile is the cysteine 87. Catalysis depends on residues histidine 174 and glutamate 176. In terms of domain architecture, GMPS ATP-PPase spans 201 to 390 (WNMENFIEVE…LGIPDEIVWR (190 aa)). Residue 228–234 (SGGVDSS) participates in ATP binding.

Homodimer.

The catalysed reaction is XMP + L-glutamine + ATP + H2O = GMP + L-glutamate + AMP + diphosphate + 2 H(+). Its pathway is purine metabolism; GMP biosynthesis; GMP from XMP (L-Gln route): step 1/1. In terms of biological role, catalyzes the synthesis of GMP from XMP. The protein is GMP synthase [glutamine-hydrolyzing] of Bacillus cereus (strain ATCC 14579 / DSM 31 / CCUG 7414 / JCM 2152 / NBRC 15305 / NCIMB 9373 / NCTC 2599 / NRRL B-3711).